We begin with the raw amino-acid sequence, 858 residues long: Selenocysteine insertion sequence-binding protein 2 (858 aa).

Disordered stretches follow at residues 127–261, 275–296, and 327–625; these read KPRH…GDVG, SDHT…CTQE, and LKKT…DSAT. Composition is skewed to basic and acidic residues over residues 147–166, 188–197, and 215–224; these read KPSD…RRAD, SSLKSDGYHK, and PEFEFSRLDF. 2 stretches are compositionally biased toward polar residues: residues 281 to 296 and 327 to 352; these read AVTS…CTQE and LKKT…NPSY. The Nuclear localization signal signature appears at 380–387; sequence KNKKKKEK. Over residues 418 to 429 the composition is skewed to basic residues; it reads RRHRGQSPKLHS. A compositionally biased stretch (polar residues) spans 430 to 447; it reads KQQTQNEFKTSGKKSQVP. The segment covering 539–548 has biased composition (basic and acidic residues); that stretch reads ILKERQERMQ. 2 stretches are compositionally biased toward polar residues: residues 554-563 and 571-582; these read SAVSLTVASD and GASNQTPSQDNP. The segment at 678 to 699 is RNA-binding; the sequence is LVLGLREVLKHLKLRKLKCIII. The segment at 785 to 819 is disordered; sequence MRQEQAGEPGPQSPPSPPMQDPIPSTEEGTLPSTG. The segment covering 795-805 has biased composition (pro residues); it reads PQSPPSPPMQD.

Its subcellular location is the cytoplasm. The protein localises to the nucleus. Functionally, mRNA-binding protein that binds to the SECIS (selenocysteine insertion sequence) element present in the 3'-UTR of mRNAs encoding selenoproteins and facilitates the incorporation of the rare amino acid selenocysteine. Insertion of selenocysteine at UGA codons is mediated by SECISBP2 and EEFSEC: SECISBP2 (1) specifically binds the SECIS sequence once the 80S ribosome encounters an in-frame UGA codon and (2) contacts the RPS27A/eS31 of the 40S ribosome before ribosome stalling. (3) GTP-bound EEFSEC then delivers selenocysteinyl-tRNA(Sec) to the 80S ribosome and adopts a preaccommodated state conformation. (4) After GTP hydrolysis, EEFSEC dissociates from the assembly, selenocysteinyl-tRNA(Sec) accommodates, and peptide bond synthesis and selenoprotein elongation occur. The sequence is that of Selenocysteine insertion sequence-binding protein 2 from Mus musculus (Mouse).